A 434-amino-acid chain; its full sequence is RHOMBOID-like protein 9, chloroplastic (434 aa).

A chloroplast-targeting transit peptide spans 1–68 (MALFPLHHEV…SPRRRLCLVR (68 aa)). A run of 8 helical transmembrane segments spans residues 182-202 (FYAVSILASINVGVCLFEAAA), 209-229 (MGLLSLPLLYGAKINDLILAG), 238-258 (MFLHSGIPHVALSSWALLTFG), 267-287 (LFTFCLIYILGGVSGNFMSFL), 289-309 (TADPTVGGTGPAFALIGAWLV), 326-346 (LFQKAIIMTGFGLILSHFGPI), 352-372 (LGALIAGIVYGFFTCPVLQLG), and 399-419 (FLLFTIFVAVIVTSLLLIGDG).

Belongs to the peptidase S54 family.

The protein resides in the plastid. It is found in the chloroplast membrane. Its function is as follows. Probable rhomboid-type serine protease that catalyzes intramembrane proteolysis. The sequence is that of RHOMBOID-like protein 9, chloroplastic from Arabidopsis thaliana (Mouse-ear cress).